Here is an 808-residue protein sequence, read N- to C-terminus: Na(+)/H(+) antiporter 2 (808 aa).

A run of 9 helical transmembrane segments spans residues 12–32, 36–56, 70–90, 105–125, 128–148, 174–194, 203–223, 244–264, and 267–287; these read HVAY…SLFV, LYIG…PHCL, ITLE…SVEL, LLVP…WILV, LNFP…PVLA, CNDG…LYPG, WICV…CIIG, FLAF…MLGV, and LLVS…AAKT. An N-linked (GlcNAc...) asparagine glycan is attached at asparagine 291. The next 5 membrane-spanning stretches (helical) occupy residues 294 to 314, 319 to 339, 361 to 381, 409 to 429, and 432 to 452; these read NVID…ILPW, NPDI…VIFL, AMFI…AITS, VMAC…IVHG, and VAVI…LPTG. 2 disordered regions span residues 478 to 499 and 541 to 562; these read QRLD…SGMV and HAST…NGRA. A compositionally biased stretch (polar residues) spans 542–561; it reads ASTNDSHGTTTANLGTSNGR. Asparagine 545 and asparagine 602 each carry an N-linked (GlcNAc...) asparagine glycan. Positions 774-808 are disordered; that stretch reads LHSEDEMADDEAESENDMDYEDSDGPASRFKDHAD. The span at 779 to 797 shows a compositional bias: acidic residues; it reads EMADDEAESENDMDYEDSD.

Belongs to the fungal Na(+)/H(+) exchanger family.

The protein resides in the membrane. Sodium export from cell, takes up external protons in exchange for internal sodium ions. Seems to be poorly expressed. The chain is Na(+)/H(+) antiporter 2 (SOD22) from Zygosaccharomyces rouxii.